Reading from the N-terminus, the 317-residue chain is MISMLAGNGSSVTEFVLAGLTDRPELQLPLFYLFLIIYIITVVGNLGLIILIGLNPHLHTPMYYFLFNLSFIDLCYSSVFSPKMLINFVSEKNSISYAGCMTQLFLFLFFVISECYMLTSMAYDRYVAICNPLLYKVTMSPQICSVISFAAYGMGFAGSSAHTGCMLRLTFCNVNVINHYLCDILPLLQLSCTSTYVNEVVVLIVVGINITVPSFTILISYVFILANILNIKSTQGRAKAFSTCSSHIMAISLFFGSAAFMYLKYSSGSMEQGKISSVFYTNVGPMLNPLIYSLRNKDVKVALRKSLIKFREKTDFN.

Residues 1–32 (MISMLAGNGSSVTEFVLAGLTDRPELQLPLFY) lie on the Extracellular side of the membrane. Asn8 carries an N-linked (GlcNAc...) asparagine glycan. The chain crosses the membrane as a helical span at residues 33-53 (LFLIIYIITVVGNLGLIILIG). At 54–59 (LNPHLH) the chain is on the cytoplasmic side. The chain crosses the membrane as a helical span at residues 60-80 (TPMYYFLFNLSFIDLCYSSVF). Topologically, residues 81–97 (SPKMLINFVSEKNSISY) are extracellular. Residues 98-118 (AGCMTQLFLFLFFVISECYML) form a helical membrane-spanning segment. At 119-136 (TSMAYDRYVAICNPLLYK) the chain is on the cytoplasmic side. The helical transmembrane segment at 137 to 157 (VTMSPQICSVISFAAYGMGFA) threads the bilayer. The Extracellular segment spans residues 158 to 199 (GSSAHTGCMLRLTFCNVNVINHYLCDILPLLQLSCTSTYVNE). Residues 200-220 (VVVLIVVGINITVPSFTILIS) traverse the membrane as a helical segment. The Cytoplasmic segment spans residues 221 to 242 (YVFILANILNIKSTQGRAKAFS). A helical membrane pass occupies residues 243–263 (TCSSHIMAISLFFGSAAFMYL). The Extracellular portion of the chain corresponds to 264-274 (KYSSGSMEQGK). The helical transmembrane segment at 275-294 (ISSVFYTNVGPMLNPLIYSL) threads the bilayer. At 295 to 317 (RNKDVKVALRKSLIKFREKTDFN) the chain is on the cytoplasmic side.

It belongs to the G-protein coupled receptor 1 family.

Its subcellular location is the cell membrane. Functionally, odorant receptor. This Mus musculus (Mouse) protein is Olfactory receptor 8B3.